A 243-amino-acid chain; its full sequence is 7-carboxy-7-deazaguanine synthase (243 aa).

Residues 9–11 (IMG) and R24 each bind substrate. The Radical SAM core domain maps to 15–243 (YIGRRFIFVR…IQMHKYLGML (229 aa)). [4Fe-4S] cluster contacts are provided by C28, C32, and C35. T84 serves as a coordination point for substrate. G86 lines the S-adenosyl-L-methionine pocket.

It belongs to the radical SAM superfamily. 7-carboxy-7-deazaguanine synthase family. In terms of assembly, homodimer. The cofactor is [4Fe-4S] cluster. S-adenosyl-L-methionine serves as cofactor. It depends on Mg(2+) as a cofactor.

The catalysed reaction is 6-carboxy-5,6,7,8-tetrahydropterin + H(+) = 7-carboxy-7-deazaguanine + NH4(+). It functions in the pathway purine metabolism; 7-cyano-7-deazaguanine biosynthesis. Catalyzes the complex heterocyclic radical-mediated conversion of 6-carboxy-5,6,7,8-tetrahydropterin (CPH4) to 7-carboxy-7-deazaguanine (CDG), a step common to the biosynthetic pathways of all 7-deazapurine-containing compounds. In Methanocaldococcus jannaschii (strain ATCC 43067 / DSM 2661 / JAL-1 / JCM 10045 / NBRC 100440) (Methanococcus jannaschii), this protein is 7-carboxy-7-deazaguanine synthase.